The chain runs to 282 residues: Bifunctional protein FolD (282 aa).

NADP(+)-binding positions include 165–167 and serine 190; that span reads GRS.

Belongs to the tetrahydrofolate dehydrogenase/cyclohydrolase family. Homodimer.

It carries out the reaction (6R)-5,10-methylene-5,6,7,8-tetrahydrofolate + NADP(+) = (6R)-5,10-methenyltetrahydrofolate + NADPH. The catalysed reaction is (6R)-5,10-methenyltetrahydrofolate + H2O = (6R)-10-formyltetrahydrofolate + H(+). Its pathway is one-carbon metabolism; tetrahydrofolate interconversion. Catalyzes the oxidation of 5,10-methylenetetrahydrofolate to 5,10-methenyltetrahydrofolate and then the hydrolysis of 5,10-methenyltetrahydrofolate to 10-formyltetrahydrofolate. The polypeptide is Bifunctional protein FolD (Acinetobacter baumannii (strain ATCC 17978 / DSM 105126 / CIP 53.77 / LMG 1025 / NCDC KC755 / 5377)).